The chain runs to 1226 residues: Chromosome-associated kinesin KIF4 (1226 aa).

One can recognise a Kinesin motor domain in the interval 8–337; sequence PVRVALRCRP…LRYADRARKI (330 aa). 87 to 94 provides a ligand contact to ATP; the sequence is GQTGSGKT. The stretch at 351–1006 forms a coiled coil; it reads ELQRLKLQVQ…YKQKLALLHV (656 aa). The segment covering 494–505 has biased composition (acidic residues); sequence EAASFPVPEEDS. 3 disordered regions span residues 494 to 516, 722 to 741, and 1052 to 1078; these read EAAS…GFTT, QRQK…GMEG, and DLLS…KQSK. Residues 722–735 are compositionally biased toward basic and acidic residues; that stretch reads QRQKEAMEKRKDSQ. Positions 1007–1226 are globular; the sequence is ASGKKLHNIL…SGCSAITEDE (220 aa). A compositionally biased stretch (acidic residues) spans 1053–1064; it reads LLSESESEEESD.

Belongs to the TRAFAC class myosin-kinesin ATPase superfamily. Kinesin family. Chromokinesin subfamily. The cofactor is [2Fe-2S] cluster. Requires [4Fe-4S] cluster as cofactor. In terms of tissue distribution, expressed in oocytes, eggs, testes and brain.

It is found in the nucleus. The protein localises to the chromosome. The protein resides in the cytoplasm. Its subcellular location is the cytoskeleton. In terms of biological role, iron-sulfur (Fe-S) cluster binding motor protein that has a role in chromosome segregation during mitosis. Required for mitotic chromosomal positioning and bipolar spindle stabilization. This is Chromosome-associated kinesin KIF4 (kif4) from Xenopus laevis (African clawed frog).